The primary structure comprises 99 residues: NAD(P)H-quinone oxidoreductase subunit 4L, chloroplastic (99 aa).

Helical transmembrane passes span Met-1–Ile-21, Met-31–Phe-51, and Ile-59–Ala-79.

Belongs to the complex I subunit 4L family. As to quaternary structure, NDH is composed of at least 16 different subunits, 5 of which are encoded in the nucleus.

It is found in the plastid. The protein resides in the chloroplast thylakoid membrane. It catalyses the reaction a plastoquinone + NADH + (n+1) H(+)(in) = a plastoquinol + NAD(+) + n H(+)(out). It carries out the reaction a plastoquinone + NADPH + (n+1) H(+)(in) = a plastoquinol + NADP(+) + n H(+)(out). Its function is as follows. NDH shuttles electrons from NAD(P)H:plastoquinone, via FMN and iron-sulfur (Fe-S) centers, to quinones in the photosynthetic chain and possibly in a chloroplast respiratory chain. The immediate electron acceptor for the enzyme in this species is believed to be plastoquinone. Couples the redox reaction to proton translocation, and thus conserves the redox energy in a proton gradient. This chain is NAD(P)H-quinone oxidoreductase subunit 4L, chloroplastic, found in Adiantum capillus-veneris (Maidenhair fern).